Consider the following 347-residue polypeptide: sn-1 oleoyl-lipid 12-desaturase (347 aa).

The next 2 membrane-spanning stretches (helical) occupy residues 41-63 (AWSR…AIAP) and 67-85 (LLPV…FVIG). The Histidine box-1 motif lies at 86–90 (HDCGH). The chain crosses the membrane as a helical span at residues 98 to 118 (WVNNLVGHLAFLPLIYPFHSW). Residues 122 to 126 (HNHHH) carry the Histidine box-2 motif. 3 helical membrane passes run 164-184 (LWWL…FAFE), 196-216 (LFVI…LGVW), and 218-238 (VVKF…TFTL). The Histidine box-3 motif lies at 286–290 (HHLST).

It belongs to the fatty acid desaturase type 2 family. Fe(2+) serves as cofactor.

The protein localises to the membrane. The enzyme catalyses a 1-[(9Z)-octadecenoyl]-2-acyl-glycerolipid + 2 reduced [2Fe-2S]-[ferredoxin] + O2 + 2 H(+) = a 1-[(9Z,12Z)-octadecdienoyl]-2-acyl-glycerolipid + 2 oxidized [2Fe-2S]-[ferredoxin] + 2 H2O. It participates in lipid metabolism; polyunsaturated fatty acid biosynthesis. In terms of biological role, desaturase involved in fatty acid biosynthesis. Introduces a double bond at carbon 12 of oleoyl groups (18:1) attached to the sn-1 position of the glycerol moiety of membrane glycerolipids. Can also efficiently catalyze the desaturation of palmitoleic acid (16:1) in vitro. This Picosynechococcus sp. (strain ATCC 27264 / PCC 7002 / PR-6) (Agmenellum quadruplicatum) protein is sn-1 oleoyl-lipid 12-desaturase.